We begin with the raw amino-acid sequence, 466 residues long: Protein hob1 (466 aa).

The BAR domain maps to 17–269 (LRSKFNVGEI…RGDVKDRAEA (253 aa)). Coiled coils occupy residues 31–67 (IYEDAGRRFKSLETEAKKLAEDAKKYTDAINGLLNHQ) and 177–204 (EKKLYEAETAFEQSSQEYEYYNEMLKEE). The disordered stretch occupies residues 280–342 (PTYKRPGMGP…ASDYSTPSAG (63 aa)). A compositionally biased stretch (low complexity) spans 294–303 (ATASSSSSFS). A phosphoserine mark is found at S298, S299, S301, and S303. The region spanning 407–466 (PAAEHVVALYDYAAQAAGDLSFHAGDRIEVVSRTDNQNEWWIGRLNGAQGQFPGNYVQLE) is the SH3 domain.

Its function is as follows. Has a role in DNA damage signaling as a part of stress response processes. This chain is Protein hob1 (hob1), found in Schizosaccharomyces pombe (strain 972 / ATCC 24843) (Fission yeast).